A 73-amino-acid polypeptide reads, in one-letter code: Large ribosomal subunit protein bL31 (73 aa).

It belongs to the bacterial ribosomal protein bL31 family. Type A subfamily. Part of the 50S ribosomal subunit.

Functionally, binds the 23S rRNA. This chain is Large ribosomal subunit protein bL31, found in Bartonella henselae (strain ATCC 49882 / DSM 28221 / CCUG 30454 / Houston 1) (Rochalimaea henselae).